A 205-amino-acid polypeptide reads, in one-letter code: Holliday junction branch migration complex subunit RuvA (205 aa).

The interval 1–64 is domain I; that stretch reads MIGRLRGTLA…EDAHLLYGFA (64 aa). A domain II region spans residues 65-143; it reads EKRERELFRE…AWETSPAMFT (79 aa). The flexible linker stretch occupies residues 144–154; it reads LVSDGPLPVAS. The domain III stretch occupies residues 154 to 205; the sequence is SESSAEADAVSALVSLGYKPQEASKAIAAIKDKAGLSSEELIRRSLKGMISK.

Belongs to the RuvA family. In terms of assembly, homotetramer. Forms an RuvA(8)-RuvB(12)-Holliday junction (HJ) complex. HJ DNA is sandwiched between 2 RuvA tetramers; dsDNA enters through RuvA and exits via RuvB. An RuvB hexamer assembles on each DNA strand where it exits the tetramer. Each RuvB hexamer is contacted by two RuvA subunits (via domain III) on 2 adjacent RuvB subunits; this complex drives branch migration. In the full resolvosome a probable DNA-RuvA(4)-RuvB(12)-RuvC(2) complex forms which resolves the HJ.

The protein localises to the cytoplasm. Its function is as follows. The RuvA-RuvB-RuvC complex processes Holliday junction (HJ) DNA during genetic recombination and DNA repair, while the RuvA-RuvB complex plays an important role in the rescue of blocked DNA replication forks via replication fork reversal (RFR). RuvA specifically binds to HJ cruciform DNA, conferring on it an open structure. The RuvB hexamer acts as an ATP-dependent pump, pulling dsDNA into and through the RuvAB complex. HJ branch migration allows RuvC to scan DNA until it finds its consensus sequence, where it cleaves and resolves the cruciform DNA. The polypeptide is Holliday junction branch migration complex subunit RuvA (Pseudomonas putida (strain ATCC 47054 / DSM 6125 / CFBP 8728 / NCIMB 11950 / KT2440)).